A 419-amino-acid polypeptide reads, in one-letter code: Methionine aminopeptidase 2 (419 aa).

A disordered region spans residues 1-69 (MSTNSSNPNE…KITAIDNSYP (69 aa)). Basic and acidic residues predominate over residues 11–29 (VMEKVQDLKIDDSKPKVDS). Over residues 30–41 (EEQPEAESDGES) the composition is skewed to acidic residues. Over residues 48–61 (KKKKKKKSKKKKKI) the composition is skewed to basic residues. Residue His172 coordinates substrate. Positions 192, 203, and 272 each coordinate a divalent metal cation. His280 provides a ligand contact to substrate. 2 residues coordinate a divalent metal cation: Glu305 and Glu400.

Belongs to the peptidase M24A family. Methionine aminopeptidase eukaryotic type 2 subfamily. It depends on Co(2+) as a cofactor. Zn(2+) is required as a cofactor. Requires Mn(2+) as cofactor. Fe(2+) serves as cofactor.

It localises to the cytoplasm. The catalysed reaction is Release of N-terminal amino acids, preferentially methionine, from peptides and arylamides.. Functionally, cotranslationally removes the N-terminal methionine from nascent proteins. The N-terminal methionine is often cleaved when the second residue in the primary sequence is small and uncharged (Met-Ala-, Cys, Gly, Pro, Ser, Thr, or Val). The polypeptide is Methionine aminopeptidase 2 (Debaryomyces hansenii (strain ATCC 36239 / CBS 767 / BCRC 21394 / JCM 1990 / NBRC 0083 / IGC 2968) (Yeast)).